A 243-amino-acid polypeptide reads, in one-letter code: Large ribosomal subunit protein uL2 (243 aa).

Disordered regions lie at residues 1–23 (MGKR…PSHR) and 204–243 (PFGG…GGRR). Positions 228–243 (KVGHIAARKTGRGGRR) are enriched in basic residues.

This sequence belongs to the universal ribosomal protein uL2 family. As to quaternary structure, part of the 50S ribosomal subunit. Forms a bridge to the 30S subunit in the 70S ribosome.

One of the primary rRNA binding proteins. Required for association of the 30S and 50S subunits to form the 70S ribosome, for tRNA binding and peptide bond formation. It has been suggested to have peptidyltransferase activity; this is somewhat controversial. Makes several contacts with the 16S rRNA in the 70S ribosome. This is Large ribosomal subunit protein uL2 from Methanopyrus kandleri (strain AV19 / DSM 6324 / JCM 9639 / NBRC 100938).